Here is a 466-residue protein sequence, read N- to C-terminus: Ribulose bisphosphate carboxylase large chain (466 aa).

Lys5 is subject to N6,N6,N6-trimethyllysine. Residues Asn114 and Thr164 each contribute to the substrate site. Catalysis depends on Lys166, which acts as the Proton acceptor. Lys168 lines the substrate pocket. Positions 192, 194, and 195 each coordinate Mg(2+). At Lys192 the chain carries N6-carboxylysine. Residue His285 is the Proton acceptor of the active site. Arg286, His318, and Ser370 together coordinate substrate.

Belongs to the RuBisCO large chain family. Type I subfamily. As to quaternary structure, heterohexadecamer of 8 large chains and 8 small chains; disulfide-linked. The disulfide link is formed within the large subunit homodimers. It depends on Mg(2+) as a cofactor. The disulfide bond which can form in the large chain dimeric partners within the hexadecamer appears to be associated with oxidative stress and protein turnover.

Its subcellular location is the plastid. The protein localises to the chloroplast. It catalyses the reaction 2 (2R)-3-phosphoglycerate + 2 H(+) = D-ribulose 1,5-bisphosphate + CO2 + H2O. The catalysed reaction is D-ribulose 1,5-bisphosphate + O2 = 2-phosphoglycolate + (2R)-3-phosphoglycerate + 2 H(+). In terms of biological role, ruBisCO catalyzes two reactions: the carboxylation of D-ribulose 1,5-bisphosphate, the primary event in carbon dioxide fixation, as well as the oxidative fragmentation of the pentose substrate in the photorespiration process. Both reactions occur simultaneously and in competition at the same active site. This Betula nigra (River birch) protein is Ribulose bisphosphate carboxylase large chain.